Reading from the N-terminus, the 272-residue chain is Cytochrome b-c1 complex subunit Rieske, mitochondrial (272 aa).

At 77–104 (VHNDVTVPDFSAYRREDVMDATTSSQTS) the chain is on the mitochondrial matrix side. A helical transmembrane segment spans residues 105–138 (SEDRKGFSYLVTATACVATAYAAKNVVTQFISSL). Residues 139 to 272 (SASADVLALS…FVGDDLVVVG (134 aa)) are Mitochondrial intermembrane-facing. The region spanning 185 to 270 (EAEVDVSKLR…YQFVGDDLVV (86 aa)) is the Rieske domain. Residues Cys-215, His-217, Leu-218, Cys-234, His-237, and Ser-239 each contribute to the [2Fe-2S] cluster site. Cys-220 and Cys-236 form a disulfide bridge.

This sequence belongs to the Rieske iron-sulfur protein family. As to quaternary structure, component of the ubiquinol-cytochrome c oxidoreductase (cytochrome b-c1 complex, complex III, CIII), a multisubunit enzyme composed of 11 subunits. The complex is composed of 3 respiratory subunits cytochrome b, cytochrome c1 and Rieske protein UQCRFS1, 2 core protein subunits UQCRC1/QCR1 and UQCRC2/QCR2, and 6 low-molecular weight protein subunits UQCRH/QCR6, UQCRB/QCR7, UQCRQ/QCR8, UQCR10/QCR9, UQCR11/QCR10 and subunit 9, the cleavage product of Rieske protein UQCRFS1. The complex exists as an obligatory dimer and forms supercomplexes (SCs) in the inner mitochondrial membrane with NADH-ubiquinone oxidoreductase (complex I, CI) and cytochrome c oxidase (complex IV, CIV), resulting in different assemblies (supercomplex SCI(1)III(2)IV(1) and megacomplex MCI(2)III(2)IV(2)). Incorporation of the Rieske protein UQCRFS1 is the penultimate step in complex III assembly. Interacts with TTC19, which is involved in the clearance of UQCRFS1 fragments. Component of the ubiquinol-cytochrome c oxidoreductase (cytochrome b-c1 complex, complex III, CIII). Subunit 9 corresponds to the mitochondrial targeting sequence (MTS) of Rieske protein UQCRFS1. It is retained after processing and incorporated inside complex III, where it remains bound to the complex and localizes between the 2 core subunits UQCRC1/QCR1 and UQCRC2/QCR2. [2Fe-2S] cluster serves as cofactor. Proteolytic processing is necessary for the correct insertion of UQCRFS1 in the complex III dimer. Several fragments are generated during UQCRFS1 insertion, most probably due to the endogenous matrix-processing peptidase (MPP) activity of the 2 core protein subunits UQCRC1/QCR1 and UQCRC2/QCR2, which are homologous to the 2 mitochondrial-processing peptidase (MPP) subunits beta-MPP and alpha-MPP respectively. The action of the protease is also necessary for the clearance of the UQCRFS1 fragments.

It is found in the mitochondrion inner membrane. It catalyses the reaction a quinol + 2 Fe(III)-[cytochrome c](out) = a quinone + 2 Fe(II)-[cytochrome c](out) + 2 H(+)(out). In terms of biological role, component of the ubiquinol-cytochrome c oxidoreductase, a multisubunit transmembrane complex that is part of the mitochondrial electron transport chain which drives oxidative phosphorylation. The respiratory chain contains 3 multisubunit complexes succinate dehydrogenase (complex II, CII), ubiquinol-cytochrome c oxidoreductase (cytochrome b-c1 complex, complex III, CIII) and cytochrome c oxidase (complex IV, CIV), that cooperate to transfer electrons derived from NADH and succinate to molecular oxygen, creating an electrochemical gradient over the inner membrane that drives transmembrane transport and the ATP synthase. The cytochrome b-c1 complex catalyzes electron transfer from ubiquinol to cytochrome c, linking this redox reaction to translocation of protons across the mitochondrial inner membrane, with protons being carried across the membrane as hydrogens on the quinol. In the process called Q cycle, 2 protons are consumed from the matrix, 4 protons are released into the intermembrane space and 2 electrons are passed to cytochrome c. The Rieske protein is a catalytic core subunit containing a [2Fe-2S] iron-sulfur cluster. It cycles between 2 conformational states during catalysis to transfer electrons from the quinol bound in the Q(0) site in cytochrome b to cytochrome c1. Incorporation of UQCRFS1 is the penultimate step in complex III assembly. Component of the ubiquinol-cytochrome c oxidoreductase (cytochrome b-c1 complex, complex III, CIII). UQCRFS1 undergoes proteolytic processing once it is incorporated in the complex III dimer. One of the fragments, called subunit 9, corresponds to its mitochondrial targeting sequence (MTS). The proteolytic processing is necessary for the correct insertion of UQCRFS1 in the complex III dimer, but the persistence of UQCRFS1-derived fragments may prevent newly imported UQCRFS1 to be processed and assembled into complex III and is detrimental for the complex III structure and function. The chain is Cytochrome b-c1 complex subunit Rieske, mitochondrial (UQCRFS1) from Gallus gallus (Chicken).